The primary structure comprises 333 residues: MPIVNGFKVGPIGLGLMGLTWRPKQTPIKQAFELMNYALSQGSNYWNAGEFYGINPPTANLDLLADYFEKYPKNADKVFLSVKGGTDFKTLAPHGDPESVTKSVKNALTRLRGKKKLDLFQCARVDHKVPIETTMKALKAFVDSGEISCVGLSEASAESIKRALAIVPIAAVETEYSLFSRDIEKNGILDTCTQLSIPIIAYAPFCHGLLTGRVKTAEDLKDFIKAFPFLRNMDKFNPKVFEKNIPFLKAVEQLAQKFGMSMPEFALNFIIANGKGMIIPIPGSTTVQRAESNLSALKKSLSSEQLEEAKKVLDKHQIFGLRYNKQLESTLSI.

The active-site Proton donor is Y52.

The protein belongs to the aldo/keto reductase family.

It is found in the cytoplasm. It catalyses the reaction pyridoxine + NADP(+) = pyridoxal + NADPH + H(+). Functionally, catalyzes the reduction of pyridoxal (PL) with NADPH and oxidation of pyridoxine (PN) with NADP(+). In Schizosaccharomyces pombe (strain 972 / ATCC 24843) (Fission yeast), this protein is Probable pyridoxal reductase 2.